The chain runs to 638 residues: 1-deoxy-D-xylulose-5-phosphate synthase (638 aa).

Residues His-78 and 119–121 contribute to the thiamine diphosphate site; that span reads AHS. Asp-150 contacts Mg(2+). Residues 151 to 152, Asn-179, Tyr-288, and Glu-370 contribute to the thiamine diphosphate site; that span reads GS. Asn-179 serves as a coordination point for Mg(2+).

The protein belongs to the transketolase family. DXPS subfamily. In terms of assembly, homodimer. Mg(2+) is required as a cofactor. Requires thiamine diphosphate as cofactor.

The catalysed reaction is D-glyceraldehyde 3-phosphate + pyruvate + H(+) = 1-deoxy-D-xylulose 5-phosphate + CO2. Its pathway is metabolic intermediate biosynthesis; 1-deoxy-D-xylulose 5-phosphate biosynthesis; 1-deoxy-D-xylulose 5-phosphate from D-glyceraldehyde 3-phosphate and pyruvate: step 1/1. Catalyzes the acyloin condensation reaction between C atoms 2 and 3 of pyruvate and glyceraldehyde 3-phosphate to yield 1-deoxy-D-xylulose-5-phosphate (DXP). In Brucella anthropi (strain ATCC 49188 / DSM 6882 / CCUG 24695 / JCM 21032 / LMG 3331 / NBRC 15819 / NCTC 12168 / Alc 37) (Ochrobactrum anthropi), this protein is 1-deoxy-D-xylulose-5-phosphate synthase.